The sequence spans 2785 residues: Testis-expressed protein 15 (2785 aa).

A compositionally biased stretch (low complexity) spans 262–274 (SSSFPSSLSNAFS). Disordered stretches follow at residues 262–331 (SSSF…PSSD), 596–620 (EQRD…SEKQ), 661–683 (NGKP…APND), 904–924 (TEST…GMCS), 943–1064 (VQES…QGRI), 2276–2458 (NRQE…TNDK), 2470–2511 (DIDA…LVPD), and 2571–2601 (TQPI…GNSA). Residues 275 to 286 (DVRKQKHSEEQV) show a composition bias toward basic and acidic residues. Over residues 314 to 331 (TCSNDSQGHFSQESPSSD) the composition is skewed to polar residues. Basic and acidic residues predominate over residues 596 to 611 (EQRDDKNPNEAKEHNT). Composition is skewed to polar residues over residues 962-989 (HNTH…TVMN) and 1021-1031 (HASSSRGQNIA). Residues 1033–1042 (KDLREHETHE) are compositionally biased toward basic and acidic residues. 8 stretches are compositionally biased toward polar residues: residues 1049-1064 (SHGS…QGRI), 2291-2314 (DSSQ…NISD), 2327-2338 (EVSQGKGNTDTV), 2353-2387 (NIQT…SISA), 2394-2415 (RQSS…CTPK), 2431-2454 (ASLT…SVAE), 2491-2502 (DHTQISPSNLTA), and 2585-2601 (DAPN…GNSA).

This sequence belongs to the TEX15 family. As to quaternary structure, interacts with PIWIL4. Interacts with PIWIL2. In terms of tissue distribution, detected in testis and ovary, and at lower levels in lung and brain.

The protein resides in the cytoplasm. It is found in the nucleus. Functionally, required during spermatogenesis for normal chromosome synapsis and meiotic recombination in germ cells. Necessary for formation of DMC1 and RAD51 foci on meiotic chromosomes, suggesting a specific role in DNA double-stranded break repair. Essential executor of PIWIL4-piRNA pathway directed transposon DNA methylation and silencing in the male embryonic germ cells. PIWIL4-piRNA binds to nascent transposon transcripts and interacts with TEX15, which may in turn recruit the epigenetic silencing machinery to the transposon loci. Not required for piRNA biosynthesis. This Mus musculus (Mouse) protein is Testis-expressed protein 15.